Consider the following 221-residue polypeptide: Lactate racemization regulatory protein (221 aa).

Positions 139-213 (NGKKGAICAF…NHKFIIQDVS (75 aa)) constitute an HTH crp-type domain. Residues 172–192 (NDDIAGFCGISSRSSVNRMLK) constitute a DNA-binding region (H-T-H motif).

As to quaternary structure, multimerizes on DNA. Multimerization is required for transcription activation.

L-lactate acts as a positive effector on the binding and multimerization of LarR on DNA, while D-lactate antagonizes the positive effect of L-lactate. In terms of biological role, positive transcriptional regulator that is absolutely required for the expression of lactate racemase (Lar) activity. Controls Lar expression by sensing the L-/D-lactate ration. Binds to a 16-bp palindromic sequence (Lar box motif) that is present in the larR-larA intergenic region, allowing transcription of the larABCDE operon. The sequence is that of Lactate racemization regulatory protein from Lactiplantibacillus plantarum (strain ATCC BAA-793 / NCIMB 8826 / WCFS1) (Lactobacillus plantarum).